The primary structure comprises 242 residues: Adenosine 5'-phosphosulfate reductase (242 aa).

Positions 125, 126, 208, and 211 each coordinate [4Fe-4S] cluster. Cys234 acts as the Nucleophile; cysteine thiosulfonate intermediate in catalysis.

This sequence belongs to the PAPS reductase family. CysH subfamily. [4Fe-4S] cluster is required as a cofactor.

Its subcellular location is the cytoplasm. The catalysed reaction is [thioredoxin]-disulfide + sulfite + AMP + 2 H(+) = adenosine 5'-phosphosulfate + [thioredoxin]-dithiol. The protein operates within sulfur metabolism; hydrogen sulfide biosynthesis; sulfite from sulfate. In terms of biological role, catalyzes the formation of sulfite from adenosine 5'-phosphosulfate (APS) using thioredoxin as an electron donor. The polypeptide is Adenosine 5'-phosphosulfate reductase (Staphylococcus saprophyticus subsp. saprophyticus (strain ATCC 15305 / DSM 20229 / NCIMB 8711 / NCTC 7292 / S-41)).